Here is a 333-residue protein sequence, read N- to C-terminus: Cytochrome f (333 aa).

Positions 1 to 16 (MRNVFRTARLTRSARA) are cleaved as a signal peptide. The chain crosses the membrane as a helical span at residues 17–36 (IVKTLLIAIATVTFYFTSDL). Heme is bound by residues Tyr45, Cys66, Cys69, and His70. Residues 299 to 319 (VKWMIAFVALVMLAQVMLVLK) traverse the membrane as a helical segment.

The protein belongs to the cytochrome f family. As to quaternary structure, the 4 large subunits of the cytochrome b6-f complex are cytochrome b6, subunit IV (17 kDa polypeptide, PetD), cytochrome f and the Rieske protein, while the 4 small subunits are PetG, PetL, PetM and PetN. The complex functions as a dimer. Heme is required as a cofactor.

The protein localises to the cellular thylakoid membrane. Functionally, component of the cytochrome b6-f complex, which mediates electron transfer between photosystem II (PSII) and photosystem I (PSI), cyclic electron flow around PSI, and state transitions. In Nostoc punctiforme (strain ATCC 29133 / PCC 73102), this protein is Cytochrome f.